A 497-amino-acid polypeptide reads, in one-letter code: MORN repeat-containing protein 1 (497 aa).

A disordered region spans residues 1 to 27 (MAAAGEGTPSSRGPRRDPPRRPPRNGY). MORN repeat units lie at residues 39 to 61 (YEGE…DGSY), 62 to 84 (YEGA…WSGD), 86 to 108 (FSGQ…AGGC), 109 to 131 (YEGE…DGQV), 132 to 154 (YQGS…NGDK), 155 to 177 (YDGD…DGST), and 178 to 200 (YKGQ…SGVT). 2 disordered regions span residues 393–425 (GGRS…ATEE) and 468–497 (QPPH…PAPR).

This Homo sapiens (Human) protein is MORN repeat-containing protein 1 (MORN1).